A 368-amino-acid polypeptide reads, in one-letter code: 3-isopropylmalate dehydrogenase (368 aa).

Position 77 to 88 (77 to 88 (GPKWGTGAVRPE)) interacts with NAD(+). Residues Arg95, Arg105, Arg134, and Asp226 each contribute to the substrate site. 3 residues coordinate Mg(2+): Asp226, Asp251, and Asp255. Residue 290 to 301 (GSAPDLPANKVN) participates in NAD(+) binding.

This sequence belongs to the isocitrate and isopropylmalate dehydrogenases family. In terms of assembly, homodimer. Mg(2+) serves as cofactor. The cofactor is Mn(2+).

Its subcellular location is the cytoplasm. The catalysed reaction is (2R,3S)-3-isopropylmalate + NAD(+) = 4-methyl-2-oxopentanoate + CO2 + NADH. It functions in the pathway amino-acid biosynthesis; L-leucine biosynthesis; L-leucine from 3-methyl-2-oxobutanoate: step 3/4. Functionally, catalyzes the oxidation of 3-carboxy-2-hydroxy-4-methylpentanoate (3-isopropylmalate) to 3-carboxy-4-methyl-2-oxopentanoate. The product decarboxylates to 4-methyl-2 oxopentanoate. The protein is 3-isopropylmalate dehydrogenase (LEU2) of Kodamaea ohmeri (Yeast).